Reading from the N-terminus, the 122-residue chain is LYR motif-containing protein 1 (122 aa).

The protein belongs to the complex I LYR family. High levels in adipose tissue.

The protein resides in the nucleus. Its function is as follows. May promote cell proliferation and inhibition of apoptosis of preadipocytes. In Homo sapiens (Human), this protein is LYR motif-containing protein 1 (LYRM1).